A 403-amino-acid polypeptide reads, in one-letter code: ESX-5 secretion system protein EccE5 (403 aa).

2 helical membrane passes run 9–29 (LALS…ILIV) and 43–63 (IAWW…VVTY).

The protein belongs to the EccE family. As to quaternary structure, part of the ESX-5 / type VII secretion system (T7SS), which is composed of cytosolic and membrane components. The ESX-5 membrane complex is composed of EccB5, EccC5, EccD5 and EccE5.

Its subcellular location is the cell inner membrane. Its function is as follows. Part of the ESX-5 specialized secretion system, which is responsible for the secretion of EsxN and a number of PE_PGRS and PPE proteins. This chain is ESX-5 secretion system protein EccE5, found in Mycobacterium marinum (strain ATCC BAA-535 / M).